The primary structure comprises 334 residues: MMDMTPTITTTTTPTPKSPEPESETPTRIQPAKPISFSNGIIKRHHHHHHPLLFTYKECLKNHAAALGGHALDGCGEFMPSPSSISSDPTSLKCAACGCHRNFHRRDPDNNNDSSQIPPPPSTAVEYQPHHRHHPPPPPPPPPPRSPNSASPPPISSSYMLLSLSGTNNNNNNLASFSDLNFSAGNNHHHHHQHTLHGSRKRFRTKFSQFQKEKMHEFAERVGWKMQKRDEDDVRDFCRQIGVDKSVLKVWMHNNKNTFNRRDIAGNEIRQIDNGGGNHTPILAGEINNHNNGHHGVGGGGELHQSVSSGGGGGGFDSDSGGANGGNVNGSSSS.

Residues methionine 1–threonine 15 are compositionally biased toward low complexity. Disordered stretches follow at residues methionine 1 to lysine 33 and phenylalanine 103 to leucine 164. Residues tyrosine 56–aspartate 107 form a ZF-HD dimerization-type; degenerate zinc finger. Residues proline 136–isoleucine 155 are compositionally biased toward pro residues. A DNA-binding region (homeobox) is located at residues arginine 200 to aspartate 263. The tract at residues asparagine 292–serine 334 is disordered. Positions serine 309–valine 328 are enriched in gly residues.

Homo- and heterodimer with other ZFHD proteins. Interacts with MIF1, MIF2 and MIF3; these interactions prevent nuclear localization and DNA-binding to inhibit transcription regulation activity. Binds to ZHD1, ZHD2, ZHD4, ZHD5, ZHD6, ZHD7 and ZHD8. Interacts with KIN10 and KIN11. Mostly expressed in rosettes (e.g. young leaves), flowers (e.g. styles), siliques and inflorescence.

Its subcellular location is the nucleus. Its function is as follows. Putative transcription factor. Probably involved in establishing polarity during leaf development through the gibberellic acid (GA) signaling pathway. The polypeptide is Zinc-finger homeodomain protein 10 (ZHD10) (Arabidopsis thaliana (Mouse-ear cress)).